Here is a 365-residue protein sequence, read N- to C-terminus: 3-dehydroquinate synthase (365 aa).

Residues 95–99, 119–120, lysine 132, and lysine 141 contribute to the NAD(+) site; these read GVVGD and TT. Positions 174, 238, and 255 each coordinate Zn(2+).

The protein belongs to the sugar phosphate cyclases superfamily. Dehydroquinate synthase family. Requires Co(2+) as cofactor. The cofactor is Zn(2+). It depends on NAD(+) as a cofactor.

The protein resides in the cytoplasm. The catalysed reaction is 7-phospho-2-dehydro-3-deoxy-D-arabino-heptonate = 3-dehydroquinate + phosphate. It functions in the pathway metabolic intermediate biosynthesis; chorismate biosynthesis; chorismate from D-erythrose 4-phosphate and phosphoenolpyruvate: step 2/7. In terms of biological role, catalyzes the conversion of 3-deoxy-D-arabino-heptulosonate 7-phosphate (DAHP) to dehydroquinate (DHQ). This is 3-dehydroquinate synthase from Chlorobium chlorochromatii (strain CaD3).